We begin with the raw amino-acid sequence, 213 residues long: Cytochrome c biogenesis ATP-binding export protein CcmA (213 aa).

An ABC transporter domain is found at Leu-7–Glu-213. Position 39 to 46 (Gly-39 to Thr-46) interacts with ATP.

The protein belongs to the ABC transporter superfamily. CcmA exporter (TC 3.A.1.107) family. As to quaternary structure, the complex is composed of two ATP-binding proteins (CcmA) and two transmembrane proteins (CcmB).

The protein resides in the cell inner membrane. It carries out the reaction heme b(in) + ATP + H2O = heme b(out) + ADP + phosphate + H(+). Its function is as follows. Part of the ABC transporter complex CcmAB involved in the biogenesis of c-type cytochromes; once thought to export heme, this seems not to be the case, but its exact role is uncertain. Responsible for energy coupling to the transport system. The chain is Cytochrome c biogenesis ATP-binding export protein CcmA from Pasteurella multocida (strain Pm70).